The following is a 418-amino-acid chain: Serine hydroxymethyltransferase (418 aa).

(6S)-5,6,7,8-tetrahydrofolate contacts are provided by residues L121 and 125–127 (GHL). K230 bears the N6-(pyridoxal phosphate)lysine mark. Residue 356-358 (SPF) participates in (6S)-5,6,7,8-tetrahydrofolate binding.

The protein belongs to the SHMT family. In terms of assembly, homodimer. The cofactor is pyridoxal 5'-phosphate.

It localises to the cytoplasm. The catalysed reaction is (6R)-5,10-methylene-5,6,7,8-tetrahydrofolate + glycine + H2O = (6S)-5,6,7,8-tetrahydrofolate + L-serine. Its pathway is one-carbon metabolism; tetrahydrofolate interconversion. The protein operates within amino-acid biosynthesis; glycine biosynthesis; glycine from L-serine: step 1/1. Catalyzes the reversible interconversion of serine and glycine with tetrahydrofolate (THF) serving as the one-carbon carrier. This reaction serves as the major source of one-carbon groups required for the biosynthesis of purines, thymidylate, methionine, and other important biomolecules. Also exhibits THF-independent aldolase activity toward beta-hydroxyamino acids, producing glycine and aldehydes, via a retro-aldol mechanism. In Pseudoalteromonas translucida (strain TAC 125), this protein is Serine hydroxymethyltransferase.